The following is a 289-amino-acid chain: uncharacterized protein (289 aa).

9 helical membrane passes run Ile13–Ser32, Leu37–Asp59, Ile80–Ile99, Glu104–Ser121, Val141–Ser160, Val165–Leu183, Val203–Ile225, Thr235–Tyr252, and Ile265–Cys287.

It localises to the cell membrane. This is an uncharacterized protein from Archaeoglobus fulgidus (strain ATCC 49558 / DSM 4304 / JCM 9628 / NBRC 100126 / VC-16).